A 405-amino-acid chain; its full sequence is Divinyl chlorophyllide a 8-vinyl-reductase, chloroplastic (405 aa).

The N-terminal 58 residues, 1-58 (MAALLLSSHLTAASSSSTTSPTARPAPSFVSFRAANAAPKGARRGWPFLASSVEPPPA), are a transit peptide targeting the chloroplast.

It is found in the plastid. The protein resides in the chloroplast. It carries out the reaction protochlorophyllide a + NADP(+) = 3,8-divinyl protochlorophyllide a + NADPH + H(+). It participates in porphyrin-containing compound metabolism; chlorophyll biosynthesis. Catalyzes the conversion of divinyl chlorophyllide to monovinyl chlorophyllide. Reduces the 8-vinyl group of the tetrapyrrole to an ethyl group using NADPH as the reductant. Can use (3,8-divinyl)-chlorophyllide a (DV-Chlidea) &gt; (3,8-divinyl)-chlorophyll a (DV-Chla) &gt; (3,8-divinyl)-protochlorophyllide a (DV-Pchlidea) &gt; (3,8-divinyl)-magnesium-protoporphyrin IX monomethyl ester (DV-MPE) &gt; (3,8-divinyl)-magnesium-protoporphyrin IX (DV-Mg-Proto) as substrates. In Oryza sativa subsp. indica (Rice), this protein is Divinyl chlorophyllide a 8-vinyl-reductase, chloroplastic (DVR).